A 355-amino-acid chain; its full sequence is Probable dual-specificity RNA methyltransferase RlmN (355 aa).

The active-site Proton acceptor is the E92. Positions 98 to 330 (FHYGLSVCVT…TELGINCGVR (233 aa)) constitute a Radical SAM core domain. C105 and C341 form a disulfide bridge. [4Fe-4S] cluster is bound by residues C112, C116, and C119. Residues 164 to 165 (GE), S196, 219 to 221 (SLH), and N297 contribute to the S-adenosyl-L-methionine site. The S-methylcysteine intermediate role is filled by C341.

Belongs to the radical SAM superfamily. RlmN family. [4Fe-4S] cluster is required as a cofactor.

It is found in the cytoplasm. The catalysed reaction is adenosine(2503) in 23S rRNA + 2 reduced [2Fe-2S]-[ferredoxin] + 2 S-adenosyl-L-methionine = 2-methyladenosine(2503) in 23S rRNA + 5'-deoxyadenosine + L-methionine + 2 oxidized [2Fe-2S]-[ferredoxin] + S-adenosyl-L-homocysteine. It carries out the reaction adenosine(37) in tRNA + 2 reduced [2Fe-2S]-[ferredoxin] + 2 S-adenosyl-L-methionine = 2-methyladenosine(37) in tRNA + 5'-deoxyadenosine + L-methionine + 2 oxidized [2Fe-2S]-[ferredoxin] + S-adenosyl-L-homocysteine. Specifically methylates position 2 of adenine 2503 in 23S rRNA and position 2 of adenine 37 in tRNAs. The chain is Probable dual-specificity RNA methyltransferase RlmN from Oceanobacillus iheyensis (strain DSM 14371 / CIP 107618 / JCM 11309 / KCTC 3954 / HTE831).